The sequence spans 547 residues: MGDTEKCNSDMIQRLHSSFGTTSSSIPKNPISQLDLNPNFIRSSAPQFSKPFSDSGKRIGVPPSHPNLIPPTSPFSQIPTTRQPGSHNFNPGGANHSRSMSQPNSFFSFDSLPPLSPSPFRDHDVSMEDRDSGVFNSNHSLPPSPFTRCNSTSSSSLRVGESLPPRKSHRRSNSDIPSGFNSMPLIPPRPLERSFSGGECADWSKSNPFVKKESSCEREGVGEREAMDDLFSAYMNLENIDVLNSSEADDSKNGNENRDDMESSRASGTKTNGSDTEGESSSVNESANNNMNSSGEKRESVKRRAAGGDIAPTTRHYRSVSVDSCFMEKLSFGDESLKPPPSPGSMSRKVSPTNSVDGNSGAAFSIEFNNGEFTAAEMKKIMANDKLAEMAMSDPKRVKRILANRQSAARSKERKMRYIVELEHKVQTLQTEATTLSAQLTLLQRDMMGLTNQNNELKFRLQAMEQQARLRDALNEALNGEVQRLKLAIGESSQNESERSKMQSLNAEMFQQLNISQLRQQPQQMQQQSHQQNHQNGTMATKSESNE.

3 disordered regions span residues 1–199 (MGDT…SGGE), 244–312 (NSSE…DIAP), and 333–356 (GDESLKPPPSPGSMSRKVSPTNSV). Polar residues predominate over residues 15–52 (LHSSFGTTSSSIPKNPISQLDLNPNFIRSSAPQFSKPF). Pro residues predominate over residues 63-73 (PSHPNLIPPTS). The segment covering 74-89 (PFSQIPTTRQPGSHNF) has biased composition (polar residues). The segment covering 120–132 (FRDHDVSMEDRDS) has biased composition (basic and acidic residues). A compositionally biased stretch (polar residues) spans 134–157 (VFNSNHSLPPSPFTRCNSTSSSSL). Positions 249–263 (DDSKNGNENRDDMES) are enriched in basic and acidic residues. Residues 264-275 (SRASGTKTNGSD) are compositionally biased toward polar residues. Low complexity predominate over residues 279-294 (ESSSVNESANNNMNSS). Residues 344-356 (GSMSRKVSPTNSV) show a composition bias toward polar residues. One can recognise a bZIP domain in the interval 394-457 (DPKRVKRILA…MGLTNQNNEL (64 aa)). Residues 396 to 417 (KRVKRILANRQSAARSKERKMR) form a basic motif region. Residues 416–469 (MRYIVELEHKVQTLQTEATTLSAQLTLLQRDMMGLTNQNNELKFRLQAMEQQAR) are a coiled coil. Residues 422–457 (LEHKVQTLQTEATTLSAQLTLLQRDMMGLTNQNNEL) are leucine-zipper. The segment covering 517-535 (QLRQQPQQMQQQSHQQNHQ) has biased composition (low complexity). A disordered region spans residues 517-547 (QLRQQPQQMQQQSHQQNHQNGTMATKSESNE). The span at 536 to 547 (NGTMATKSESNE) shows a compositional bias: polar residues.

In terms of assembly, forms homodimers. In terms of tissue distribution, expressed in roots, leaves and flowers. Expressed in the root tips, lateral root primordia, and guard cells of leaves, hypocotyls and anthers.

The protein localises to the cytoplasm. Its subcellular location is the nucleus. In terms of biological role, transcription factor that acts as a repressor of reproductive development, meristem size and plant growth. Regulates meristem size, cell size and cell number during plant development. Binds to the promoters of the cell cycle regulators CYCB1-2 and SMR4, and genes involved in cell wall organization, such as XTH9, EXPA1 and EXPA3. Possesses transactivation activity in yeast. Possesses transactivation activity in plant protoplasts. Plays a role in abiotic stress response by binding to the 5'-CAGCTG-3' DNA sequence found in the promoters of MYB44 and TRX8. Plays a role in osmosensory response by binding to the 5'-AGCTGT/G-3' DNA sequence found in the promoters of the hypoosmolarity-responsive genes CYP707A1 and CYP707A3. Binds to the 5'-AGCTGT-3' DNA sequence found in the promoter of the ZAT1 gene in response to abiotic stresses, such as oxidative stress, high-light, osmotic shock, salt and heat stresses. The polypeptide is bZIP transcription factor 29 (Arabidopsis thaliana (Mouse-ear cress)).